A 592-amino-acid chain; its full sequence is uncharacterized protein (592 aa).

The next 6 membrane-spanning stretches (helical) occupy residues 12–32 (IWILQTLAITSVVFSFGIFLL), 58–78 (PILFFLLIVAMTLLSVRISLV), 102–122 (MGLFCVIAASSVSAALVSYYL), 191–211 (ISYTILLWGLAGPMIVLGVEI), 214–234 (MMVFLVFGYVIFTTLIAFWLG), and 299–319 (FSGFNLVVSQISVVFPLLIQV). The ABC transmembrane type-1 domain maps to 58-358 (PILFFLLIVA…FRSTYDNFAS (301 aa)). The ABC transporter domain maps to 391–592 (VIFKNLSIQN…LQDKGQWQVL (202 aa)). 424 to 431 (GKSGAGKT) serves as a coordination point for ATP.

The protein belongs to the ABC transporter superfamily.

It localises to the cell inner membrane. This is an uncharacterized protein from Haemophilus influenzae (strain ATCC 51907 / DSM 11121 / KW20 / Rd).